A 273-amino-acid polypeptide reads, in one-letter code: Polyamine aminopropyltransferase (273 aa).

The PABS domain maps to 5-238 (ENWFSERYSD…GFWSFTIASE (234 aa)). Glutamine 34 contributes to the S-methyl-5'-thioadenosine binding site. Histidine 65 and aspartate 90 together coordinate spermidine. Residues glutamate 109 and 140-141 (DG) contribute to the S-methyl-5'-thioadenosine site. Aspartate 158 serves as the catalytic Proton acceptor. 158-161 (DSTD) lines the spermidine pocket. S-methyl-5'-thioadenosine is bound at residue proline 165.

This sequence belongs to the spermidine/spermine synthase family. As to quaternary structure, homodimer or homotetramer.

Its subcellular location is the cytoplasm. The enzyme catalyses S-adenosyl 3-(methylsulfanyl)propylamine + putrescine = S-methyl-5'-thioadenosine + spermidine + H(+). The protein operates within amine and polyamine biosynthesis; spermidine biosynthesis; spermidine from putrescine: step 1/1. Catalyzes the irreversible transfer of a propylamine group from the amino donor S-adenosylmethioninamine (decarboxy-AdoMet) to putrescine (1,4-diaminobutane) to yield spermidine. This is Polyamine aminopropyltransferase from Thermoplasma volcanium (strain ATCC 51530 / DSM 4299 / JCM 9571 / NBRC 15438 / GSS1).